A 484-amino-acid chain; its full sequence is ATP synthase subunit beta (484 aa).

169 to 176 serves as a coordination point for ATP; sequence GGAGVGKT.

It belongs to the ATPase alpha/beta chains family. F-type ATPases have 2 components, CF(1) - the catalytic core - and CF(0) - the membrane proton channel. CF(1) has five subunits: alpha(3), beta(3), gamma(1), delta(1), epsilon(1). CF(0) has three main subunits: a(1), b(2) and c(9-12). The alpha and beta chains form an alternating ring which encloses part of the gamma chain. CF(1) is attached to CF(0) by a central stalk formed by the gamma and epsilon chains, while a peripheral stalk is formed by the delta and b chains.

It localises to the cell membrane. The enzyme catalyses ATP + H2O + 4 H(+)(in) = ADP + phosphate + 5 H(+)(out). Produces ATP from ADP in the presence of a proton gradient across the membrane. The catalytic sites are hosted primarily by the beta subunits. This Cutibacterium acnes (strain DSM 16379 / KPA171202) (Propionibacterium acnes) protein is ATP synthase subunit beta.